We begin with the raw amino-acid sequence, 324 residues long: Glyoxylate/hydroxypyruvate reductase B (324 aa).

Residues arginine 237 and glutamate 266 contribute to the active site. Histidine 285 acts as the Proton donor in catalysis.

Belongs to the D-isomer specific 2-hydroxyacid dehydrogenase family. GhrB subfamily. Homodimer.

The protein localises to the cytoplasm. The enzyme catalyses glycolate + NADP(+) = glyoxylate + NADPH + H(+). The catalysed reaction is (R)-glycerate + NAD(+) = 3-hydroxypyruvate + NADH + H(+). It carries out the reaction (R)-glycerate + NADP(+) = 3-hydroxypyruvate + NADPH + H(+). In terms of biological role, catalyzes the NADPH-dependent reduction of glyoxylate and hydroxypyruvate into glycolate and glycerate, respectively. This is Glyoxylate/hydroxypyruvate reductase B from Escherichia coli O6:K15:H31 (strain 536 / UPEC).